The following is a 606-amino-acid chain: MQAEPAFDAKAFCAGLPSQPGVYRMMNSAGQVIYVGKAIDLKKRVSSYFQKNGLAPRTQLMVSQIAGIETTVTRSEAEALLLENNLIKSLNPRYNILFRDDKSYPYVILSGHRFPRLGFHRGPLDKKHHYFGPFPNAGMVRESIQLLQKVFRIRTCEDSVFSNRTRPCLLYQIKRCSGPCVDLVSEEVYAEDARDAELFLQGKQTEVLKSITRKMHEAAEEQEYEQAALFRDQIQSLRKICERQFVDSGRALDADIVACVAENNGGGRVCVNLAMVRGGRHLGDKSFFPQNAEGYDLATVAEAFLAQHYLNRSIPDLIIVGERVPRESLQALLTQQAGHKVIINVNPIGSRRVWLEMATENAALALEQMLGRQASQEERLLALQQALDMTGLSRIECFDISHTMGEATIASCVVYDNFGMRNSEYRRYNITDITPGDDYAAMRDVLSRRYHKIAEGEGNLPDLILIDGGRGQINAALEVMVELGLNDANLVGVAKGEERKPGLEQLIFPGVKKPLQLSKDHPGLHLIQQIRDEAHRFAIYGHRAKLGKARVSSSLEQIAGIGAKRRQSLLARFGGLKGVRTASIEELQQADGISRALAEKIYRELH.

The region spanning 18–96 (SQPGVYRMMN…IKSLNPRYNI (79 aa)) is the GIY-YIG domain. In terms of domain architecture, UVR spans 205–240 (TEVLKSITRKMHEAAEEQEYEQAALFRDQIQSLRKI).

This sequence belongs to the UvrC family. As to quaternary structure, interacts with UvrB in an incision complex.

It is found in the cytoplasm. In terms of biological role, the UvrABC repair system catalyzes the recognition and processing of DNA lesions. UvrC both incises the 5' and 3' sides of the lesion. The N-terminal half is responsible for the 3' incision and the C-terminal half is responsible for the 5' incision. In Nitrosospira multiformis (strain ATCC 25196 / NCIMB 11849 / C 71), this protein is UvrABC system protein C.